A 354-amino-acid chain; its full sequence is tRNA N6-adenosine threonylcarbamoyltransferase (354 aa).

The Fe cation site is built by His115 and His119. Substrate contacts are provided by residues 138–142 (LVSGG), Asp171, Gly184, and Asn276. Asp304 is a Fe cation binding site.

The protein belongs to the KAE1 / TsaD family. Fe(2+) serves as cofactor.

It is found in the cytoplasm. It catalyses the reaction L-threonylcarbamoyladenylate + adenosine(37) in tRNA = N(6)-L-threonylcarbamoyladenosine(37) in tRNA + AMP + H(+). Required for the formation of a threonylcarbamoyl group on adenosine at position 37 (t(6)A37) in tRNAs that read codons beginning with adenine. Is involved in the transfer of the threonylcarbamoyl moiety of threonylcarbamoyl-AMP (TC-AMP) to the N6 group of A37, together with TsaE and TsaB. TsaD likely plays a direct catalytic role in this reaction. The chain is tRNA N6-adenosine threonylcarbamoyltransferase from Xanthomonas campestris pv. campestris (strain 8004).